Reading from the N-terminus, the 207-residue chain is Small ribosomal subunit protein uS2 (207 aa).

This sequence belongs to the universal ribosomal protein uS2 family.

In Pyrobaculum islandicum (strain DSM 4184 / JCM 9189 / GEO3), this protein is Small ribosomal subunit protein uS2.